We begin with the raw amino-acid sequence, 516 residues long: Alstonine synthase (516 aa).

Residues 6 to 26 (NFSLTSPIFLLLSSLFLIILL) traverse the membrane as a helical segment. Cys453 is a heme binding site.

The protein belongs to the cytochrome P450 family. Heme is required as a cofactor. Highly expressed in stems. Expressed at low levels in roots.

It is found in the endoplasmic reticulum membrane. The enzyme catalyses tetrahydroalstonine + A + reduced [NADPH--hemoprotein reductase] + O2 = alstonine + AH2 + oxidized [NADPH--hemoprotein reductase] + 2 H2O + H(+). It carries out the reaction ajmalicine + A + reduced [NADPH--hemoprotein reductase] + O2 = serpentine + AH2 + oxidized [NADPH--hemoprotein reductase] + 2 H2O + H(+). Its pathway is alkaloid biosynthesis. Functionally, involved in monoterpene indole alkaloids (MIAs) biosynthesis. Converts by aromatization the tetrahydro-beta-carboline alkaloids tetrahydroalstonine and ajmalicine to the corresponding beta-carboline alkaloids alstonine and serpentine, respectively. The polypeptide is Alstonine synthase (Catharanthus roseus (Madagascar periwinkle)).